The chain runs to 380 residues: MSCPYASNGNEHDDGAIPLSNEVGKIYGEYLMLDKLLDAQCMLSMEDKRPVHDEHLFIITHQAYELWFKQIIFEFDSIRDMLDAEVIDETKTLEIVKRLNRVVLILKLLVDQVPILETMTPLDFMDFRKYLAPASGFQSLQFRLIENKLGVLTEQRVKYNQKYTDVFGNDKKALHAIRDSEDSPSLLTLVQRWLERTPGLEEDGFNFWAKFQQSVDQFLAAQVQSAMLEPVERAKNYRLMDIEKRREVYRSIFDPAVHDALVKRGDRRFSHRALQGAIMITFYRDEPRFSQPHQLLTLLMDIDSLITKWRYNHVIMVQRMIGSQQLGTGGSSGYQYLRSTLSDRYKVFLDLFNLSTFLIPREAIPPLDETIRRKLIHKSV.

Substrate contacts are provided by residues 57 to 61 (FIITH) and Arg-128. His-313 contributes to the heme binding site. Substrate is bound at residue Thr-328.

It belongs to the tryptophan 2,3-dioxygenase family. In terms of assembly, homotetramer. Dimer of dimers. Requires heme as cofactor.

It carries out the reaction L-tryptophan + O2 = N-formyl-L-kynurenine. The protein operates within amino-acid degradation; L-tryptophan degradation via kynurenine pathway; L-kynurenine from L-tryptophan: step 1/2. It functions in the pathway pigment biosynthesis; ommochrome biosynthesis. Functionally, heme-dependent dioxygenase that catalyzes the oxidative cleavage of the L-tryptophan (L-Trp) pyrrole ring and converts L-tryptophan to N-formyl-L-kynurenine. Catalyzes the oxidative cleavage of the indole moiety. This Drosophila mojavensis (Fruit fly) protein is Tryptophan 2,3-dioxygenase.